A 291-amino-acid polypeptide reads, in one-letter code: tRNA U34 carboxymethyltransferase (291 aa).

Residues Lys-61, Trp-75, Lys-80, Gly-100, 122 to 124 (DPS), Tyr-169, and Arg-284 each bind carboxy-S-adenosyl-L-methionine.

Belongs to the class I-like SAM-binding methyltransferase superfamily. CmoB family. Homotetramer.

It carries out the reaction carboxy-S-adenosyl-L-methionine + 5-hydroxyuridine(34) in tRNA = 5-carboxymethoxyuridine(34) in tRNA + S-adenosyl-L-homocysteine + H(+). Its function is as follows. Catalyzes carboxymethyl transfer from carboxy-S-adenosyl-L-methionine (Cx-SAM) to 5-hydroxyuridine (ho5U) to form 5-carboxymethoxyuridine (cmo5U) at position 34 in tRNAs. This chain is tRNA U34 carboxymethyltransferase, found in Campylobacter lari (strain RM2100 / D67 / ATCC BAA-1060).